The chain runs to 204 residues: Large ribosomal subunit protein uL10 (204 aa).

Residues 170–204 (AADPSVIGGAGEASDQEPKTTETPEASAAQDNTNE) are disordered. Over residues 192–204 (TPEASAAQDNTNE) the composition is skewed to polar residues.

It belongs to the universal ribosomal protein uL10 family. As to quaternary structure, part of the ribosomal stalk of the 50S ribosomal subunit. The N-terminus interacts with L11 and the large rRNA to form the base of the stalk. The C-terminus forms an elongated spine to which L12 dimers bind in a sequential fashion forming a multimeric L10(L12)X complex.

Its function is as follows. Forms part of the ribosomal stalk, playing a central role in the interaction of the ribosome with GTP-bound translation factors. This Cutibacterium acnes (strain DSM 16379 / KPA171202) (Propionibacterium acnes) protein is Large ribosomal subunit protein uL10.